Here is a 372-residue protein sequence, read N- to C-terminus: Queuine tRNA-ribosyltransferase (372 aa).

Catalysis depends on aspartate 92, which acts as the Proton acceptor. Substrate-binding positions include 92–96 (DSGGY), aspartate 146, glutamine 188, and glycine 215. Residues 246–252 (GIGSLRE) form an RNA binding region. Aspartate 265 acts as the Nucleophile in catalysis. The segment at 270 to 274 (TRLGR) is RNA binding; important for wobble base 34 recognition. Cysteine 303, cysteine 305, cysteine 308, and histidine 334 together coordinate Zn(2+).

The protein belongs to the queuine tRNA-ribosyltransferase family. In terms of assembly, homodimer. Within each dimer, one monomer is responsible for RNA recognition and catalysis, while the other monomer binds to the replacement base PreQ1. Zn(2+) serves as cofactor.

It carries out the reaction 7-aminomethyl-7-carbaguanine + guanosine(34) in tRNA = 7-aminomethyl-7-carbaguanosine(34) in tRNA + guanine. It participates in tRNA modification; tRNA-queuosine biosynthesis. Catalyzes the base-exchange of a guanine (G) residue with the queuine precursor 7-aminomethyl-7-deazaguanine (PreQ1) at position 34 (anticodon wobble position) in tRNAs with GU(N) anticodons (tRNA-Asp, -Asn, -His and -Tyr). Catalysis occurs through a double-displacement mechanism. The nucleophile active site attacks the C1' of nucleotide 34 to detach the guanine base from the RNA, forming a covalent enzyme-RNA intermediate. The proton acceptor active site deprotonates the incoming PreQ1, allowing a nucleophilic attack on the C1' of the ribose to form the product. After dissociation, two additional enzymatic reactions on the tRNA convert PreQ1 to queuine (Q), resulting in the hypermodified nucleoside queuosine (7-(((4,5-cis-dihydroxy-2-cyclopenten-1-yl)amino)methyl)-7-deazaguanosine). The chain is Queuine tRNA-ribosyltransferase from Prochlorococcus marinus (strain MIT 9211).